The primary structure comprises 268 residues: Tryptophan synthase alpha chain (268 aa).

Active-site proton acceptor residues include E49 and D60.

This sequence belongs to the TrpA family. As to quaternary structure, tetramer of two alpha and two beta chains.

It carries out the reaction (1S,2R)-1-C-(indol-3-yl)glycerol 3-phosphate + L-serine = D-glyceraldehyde 3-phosphate + L-tryptophan + H2O. It participates in amino-acid biosynthesis; L-tryptophan biosynthesis; L-tryptophan from chorismate: step 5/5. Its function is as follows. The alpha subunit is responsible for the aldol cleavage of indoleglycerol phosphate to indole and glyceraldehyde 3-phosphate. This Haemophilus influenzae (strain PittEE) protein is Tryptophan synthase alpha chain.